We begin with the raw amino-acid sequence, 404 residues long: MENKIFSVAEISQIFKEAIEGSNYFKNIYVRGEVGNLTFNKSGHVYFSLKDNQSTIAAMIWKSNAHKLTNLNVKEGMEITCYGRLTYYVPSGRVSFEAVDVSVEGKGDLQEIFEERLKEITALGWTDESRKKPINRFAKNIGLITTDSGAAIKDLITTLKRRMPSVNIYLFPTMVQGETAKFDIANKIQQANLFEPKLDILIVGRGGGSYEDLWTFNEMKVLKAIVDSSIPVISAVGHEPDITLSDYVADLRAATPTAAAELASISTEELLKELAYNYENQIRLFKNVYNNQQLKIEEFKKQNILKINNKYDLQSLDLNYIEKSFINNINNIISRNEMFIENIESKTALLDPKKPLDKGFGLIMSKDKQIINSVDKVDINQEIKLVLKDGEIETIIKGVKKHGK.

This sequence belongs to the XseA family. Heterooligomer composed of large and small subunits.

The protein resides in the cytoplasm. It carries out the reaction Exonucleolytic cleavage in either 5'- to 3'- or 3'- to 5'-direction to yield nucleoside 5'-phosphates.. Functionally, bidirectionally degrades single-stranded DNA into large acid-insoluble oligonucleotides, which are then degraded further into small acid-soluble oligonucleotides. The chain is Exodeoxyribonuclease 7 large subunit from Mesoplasma florum (strain ATCC 33453 / NBRC 100688 / NCTC 11704 / L1) (Acholeplasma florum).